The chain runs to 469 residues: 3-isopropylmalate dehydratase large subunit (469 aa).

[4Fe-4S] cluster contacts are provided by Cys-350, Cys-410, and Cys-413.

It belongs to the aconitase/IPM isomerase family. LeuC type 1 subfamily. In terms of assembly, heterodimer of LeuC and LeuD. Requires [4Fe-4S] cluster as cofactor.

The catalysed reaction is (2R,3S)-3-isopropylmalate = (2S)-2-isopropylmalate. It participates in amino-acid biosynthesis; L-leucine biosynthesis; L-leucine from 3-methyl-2-oxobutanoate: step 2/4. Its function is as follows. Catalyzes the isomerization between 2-isopropylmalate and 3-isopropylmalate, via the formation of 2-isopropylmaleate. In Rhodopseudomonas palustris (strain TIE-1), this protein is 3-isopropylmalate dehydratase large subunit.